A 443-amino-acid polypeptide reads, in one-letter code: ATP-dependent protease ATPase subunit HslU (443 aa).

Residues isoleucine 18, 60 to 65, aspartate 256, glutamate 321, and arginine 393 contribute to the ATP site; that span reads GVGKTE.

This sequence belongs to the ClpX chaperone family. HslU subfamily. As to quaternary structure, a double ring-shaped homohexamer of HslV is capped on each side by a ring-shaped HslU homohexamer. The assembly of the HslU/HslV complex is dependent on binding of ATP.

It localises to the cytoplasm. ATPase subunit of a proteasome-like degradation complex; this subunit has chaperone activity. The binding of ATP and its subsequent hydrolysis by HslU are essential for unfolding of protein substrates subsequently hydrolyzed by HslV. HslU recognizes the N-terminal part of its protein substrates and unfolds these before they are guided to HslV for hydrolysis. This chain is ATP-dependent protease ATPase subunit HslU, found in Vibrio parahaemolyticus serotype O3:K6 (strain RIMD 2210633).